We begin with the raw amino-acid sequence, 420 residues long: Mannose-1-phosphate guanylyltransferase regulatory subunit alpha (420 aa).

A substrate-binding domain region spans residues 2–251; that stretch reads LKAVILIGGP…DGIWSQIKSA (250 aa). 2 residues coordinate GDP-alpha-D-mannose: Glu85 and Gln247. Residues 273–420 form a hexapeptide repeat domain region; that stretch reads LAKHTPGGPR…SRSFTNQIIL (148 aa). Residues 356–384 form a C-loop region; sequence TPNDPNPNDPRARMDSESLFKDGKLLPAI.

It belongs to the transferase hexapeptide repeat family. In terms of assembly, component of the GMPPA-GMPPB mannose-1-phosphate guanylyltransferase complex composed of 4 GMPPA subunits and 8 GMPPB subunits; the complex is organized into three layers, a central layer made up of 2 GMPPA dimers sandwiched between two layers each made up of 2 GMPPB dimers.

Its subcellular location is the cytoplasm. Its function is as follows. Regulatory subunit of the GMPPA-GMPPB mannose-1-phosphate guanylyltransferase complex; reduces the catalytic activity of GMPPB when part of the complex. Mediates allosteric feedback inhibition of GMPPB catalytic activity upon binding GDP-alpha-D-mannose. Together with GMPPB regulates GDP-alpha-D-mannose levels. In Papio anubis (Olive baboon), this protein is Mannose-1-phosphate guanylyltransferase regulatory subunit alpha (GMPPA).